Here is a 119-residue protein sequence, read N- to C-terminus: ATP-dependent Clp protease adapter protein ClpS (119 aa).

The segment at 1-33 is disordered; the sequence is MATRIPKTPSTPPAQKPAGDDGDSVVLERRPQK.

The protein belongs to the ClpS family. As to quaternary structure, binds to the N-terminal domain of the chaperone ClpA.

Involved in the modulation of the specificity of the ClpAP-mediated ATP-dependent protein degradation. The polypeptide is ATP-dependent Clp protease adapter protein ClpS (Variovorax paradoxus (strain S110)).